Consider the following 209-residue polypeptide: Orotate phosphoribosyltransferase (209 aa).

Residues Arg-96, Lys-100, His-102, and 122–130 (EDLISTGGS) each bind 5-phospho-alpha-D-ribose 1-diphosphate. Ser-126 contributes to the orotate binding site.

It belongs to the purine/pyrimidine phosphoribosyltransferase family. PyrE subfamily. As to quaternary structure, homodimer. Mg(2+) is required as a cofactor.

It carries out the reaction orotidine 5'-phosphate + diphosphate = orotate + 5-phospho-alpha-D-ribose 1-diphosphate. It functions in the pathway pyrimidine metabolism; UMP biosynthesis via de novo pathway; UMP from orotate: step 1/2. Catalyzes the transfer of a ribosyl phosphate group from 5-phosphoribose 1-diphosphate to orotate, leading to the formation of orotidine monophosphate (OMP). In Streptococcus pyogenes serotype M3 (strain ATCC BAA-595 / MGAS315), this protein is Orotate phosphoribosyltransferase.